Consider the following 166-residue polypeptide: MTDRTAFYAGSFDPLTNGHLDVLKGALELADTVVIGIGIHPGKKPLFSYGERVALIERSAKDELGADGGRIKVVAFDNLVIDAARVHGASIMIRGLRDGTDLDYEMQMAGMNQTMAPELLTVFLPASPSVRTVTATLVRQIASMGGNVAPFVPAVVAAALKEKFSA.

Residue S11 coordinates substrate. ATP is bound by residues 11–12 (SF) and H19. Residues K43, V80, and R94 each contribute to the substrate site. Residues 95-97 (GLR), E105, and 130-136 (VRTVTAT) each bind ATP.

This sequence belongs to the bacterial CoaD family. Homohexamer. It depends on Mg(2+) as a cofactor.

The protein localises to the cytoplasm. The enzyme catalyses (R)-4'-phosphopantetheine + ATP + H(+) = 3'-dephospho-CoA + diphosphate. It participates in cofactor biosynthesis; coenzyme A biosynthesis; CoA from (R)-pantothenate: step 4/5. Functionally, reversibly transfers an adenylyl group from ATP to 4'-phosphopantetheine, yielding dephospho-CoA (dPCoA) and pyrophosphate. The polypeptide is Phosphopantetheine adenylyltransferase (Chelativorans sp. (strain BNC1)).